The chain runs to 743 residues: Fork head transcription factor 1 (743 aa).

An FHA domain is found at 39-94 (VTMGRKASNSSDCDVHLGDTKAISRQHAKIFYSFPNQRFEISVMGKNGAFVDGEFV). Disordered regions lie at residues 214-291 (QPPK…ATQK), 411-450 (GISA…LQNG), and 529-743 (QMQG…SSYT). Positions 221–230 (VSPSSIQRLS) are enriched in polar residues. The segment at residues 291 to 385 (KPNLSYANLI…EGNFFRRTKK (95 aa)) is a DNA-binding region (fork-head). A compositionally biased stretch (basic and acidic residues) spans 434-443 (SRGENVEDRP). The span at 529-539 (QMQGPQQVQQQ) shows a compositional bias: low complexity. Polar residues predominate over residues 562–576 (NITSPSPSISVTQRP). The segment covering 614-624 (SAGPSSVRSSS) has biased composition (low complexity). Polar residues-rich tracts occupy residues 625–643 (YNST…QNLH), 670–686 (TGNQ…ASSF), and 695–726 (ENGS…NSSD).

It localises to the nucleus. Functionally, acts as a transcriptional activator for ribosomal protein genes (RPG) that contain a HomolE UAS (upstream activating sequence) in addition to a HomolD promoter element; HomolD plays the role of a TATA box in RPG promoters that do not contain a canonical TATA sequence. Binds to HomolE elements with consensus sequence 3'-ACCCTACCCT-5' (or its inverted form AGGGTAGGGT). In Schizosaccharomyces pombe (strain 972 / ATCC 24843) (Fission yeast), this protein is Fork head transcription factor 1.